A 216-amino-acid chain; its full sequence is Thiopurine S-methyltransferase (216 aa).

S-adenosyl-L-methionine is bound by residues W11, L46, E67, and R122.

This sequence belongs to the class I-like SAM-binding methyltransferase superfamily. TPMT family.

The protein localises to the cytoplasm. It catalyses the reaction S-adenosyl-L-methionine + a thiopurine = S-adenosyl-L-homocysteine + a thiopurine S-methylether.. The protein is Thiopurine S-methyltransferase of Vibrio parahaemolyticus serotype O3:K6 (strain RIMD 2210633).